Reading from the N-terminus, the 289-residue chain is Tachykinins (289 aa).

A signal peptide spans 1–24 (MRPLSGLIALALLLLLLLTAPSSA). The interval 24–94 (AADTETESSG…DEEADSSYAE (71 aa)) is disordered. The propeptide occupies 25–47 (ADTETESSGSPLTPGAEEPRRVV). An Arginine amide modification is found at Arg-59. Basic and acidic residues predominate over residues 60-69 (GKKDEEHDTS). Asn-95 is modified (asparagine amide). The residue at position 110 (Arg-110) is an Arginine amide. Val-153 is subject to Valine amide. Arginine amide occurs at positions 165, 200, 239, and 281. Residues 285–289 (PALFE) constitute a propeptide that is removed on maturation.

This sequence belongs to the tachykinin family. In terms of tissue distribution, strong expression is seen in a group of 14 cells plus one isolated cell in the midgut of stage 17 embryos. Also expressed in a pair of medially located unidentified cells, just posterior to the brain, and in two lateral groups of cells that may be associated with tracheae. Expression in the larval gut is restricted to cells with endocrine cell-like morphology in the posterior midgut, just anterior to the malphigian tubules. In the brain, expression is detected in a restricted number of neuronal cell bodies. Expression in the adult female gut is restricted to the midgut with no expression detected in the hindgut.

It is found in the secreted. In terms of biological role, tachykinins are active peptides which excite neurons, evoke behavioral responses, are potent vasodilators and secretagogues, and contract (directly or indirectly) many smooth muscles. Stimulates gut muscle contractions. Required for the response to the male sex pheromone CH503 which is transferred from males to females during mating and inhibits courtship behavior by other males. The Gr68a gustatory receptor is required for detection of the pheromone and Gr68a-expressing neurons in the male foreleg relay signals to the suboesophageal zone (SEZ) which leads to courtship suppression through release of tachykinin from a cluster of 8-10 neurons in the SEZ. The sequence is that of Tachykinins from Drosophila melanogaster (Fruit fly).